Consider the following 145-residue polypeptide: uncharacterized protein (145 aa).

Residues 1-18 (MAEQQPSKEEKKEDKKDE) show a composition bias toward basic and acidic residues. Residues 1-61 (MAEQQPSKEE…CTEGEWDASD (61 aa)) are disordered.

This is an uncharacterized protein from Caenorhabditis elegans.